Here is a 255-residue protein sequence, read N- to C-terminus: Leucyl/phenylalanyl-tRNA--protein transferase (255 aa).

It belongs to the L/F-transferase family.

It is found in the cytoplasm. The catalysed reaction is N-terminal L-lysyl-[protein] + L-leucyl-tRNA(Leu) = N-terminal L-leucyl-L-lysyl-[protein] + tRNA(Leu) + H(+). It carries out the reaction N-terminal L-arginyl-[protein] + L-leucyl-tRNA(Leu) = N-terminal L-leucyl-L-arginyl-[protein] + tRNA(Leu) + H(+). It catalyses the reaction L-phenylalanyl-tRNA(Phe) + an N-terminal L-alpha-aminoacyl-[protein] = an N-terminal L-phenylalanyl-L-alpha-aminoacyl-[protein] + tRNA(Phe). Functionally, functions in the N-end rule pathway of protein degradation where it conjugates Leu, Phe and, less efficiently, Met from aminoacyl-tRNAs to the N-termini of proteins containing an N-terminal arginine or lysine. In Burkholderia pseudomallei (strain 1106a), this protein is Leucyl/phenylalanyl-tRNA--protein transferase.